The following is a 130-amino-acid chain: Ribosome-binding factor A (130 aa).

The protein belongs to the RbfA family. As to quaternary structure, monomer. Binds 30S ribosomal subunits, but not 50S ribosomal subunits or 70S ribosomes.

The protein localises to the cytoplasm. Its function is as follows. One of several proteins that assist in the late maturation steps of the functional core of the 30S ribosomal subunit. Associates with free 30S ribosomal subunits (but not with 30S subunits that are part of 70S ribosomes or polysomes). Required for efficient processing of 16S rRNA. May interact with the 5'-terminal helix region of 16S rRNA. The chain is Ribosome-binding factor A from Alkalilimnicola ehrlichii (strain ATCC BAA-1101 / DSM 17681 / MLHE-1).